The following is a 456-amino-acid chain: MTSDHRDALFSLELESPDPDEGGVADGGESDTDEDLRDNDDVVMPGTNEAEAEDDDPEEEDLNSPSTSSLPMVSTISATAVVSGTPTATSSTGAVTVALPAGSAVPVSVIPVDSDPKWHRMTEIVHQRPPIDDSRRLFQRLWTDEDEIELLRGFLDYMTMHRGSSSHPPDTAPFYEQIKSKLQLDFNKNQLVEKLRRLKKKYRNVMSKISSGKEVFFKSPHDQSTFEISRKIWNQTGKIIGFEDNNVMDFEETNNHHNTTNGNYSTFNSPSSNPTLELDSENGIEKKLTMSSSSVSRKRSRSRIGKIEEDNKPVITPSDGPIASNVNLNEAAAVGIGGNLGGLIEETVKNCVSPVIKEMMNGTTSMMMAAMGGGFPGLGGGGGGGGGHGFGSLSPMFTRPFNFGFGVEGGGNKAVADERWRKQQILELEVYSRRLELVQEQIRTTLNELKTMPSGI.

The segment at Met-1–Pro-71 is disordered. 2 stretches are compositionally biased toward acidic residues: residues Glu-15 to Asp-38 and Ala-50 to Leu-62. Ser-16 bears the Phosphoserine mark.

This sequence belongs to the GeBP family.

In Arabidopsis thaliana (Mouse-ear cress), this protein is Probable transcription factor At3g04930.